We begin with the raw amino-acid sequence, 1020 residues long: Sodium/potassium-transporting ATPase subunit alpha-2 (1020 aa).

A propeptide spanning residues Met1–Ala5 is cleaved from the precursor. A disordered region spans residues Met1–Asp31. Residues Gly6–Pro85 are Cytoplasmic-facing. The residue at position 10 (Ser10) is a Phosphoserine. Residues Pro80–Pro82 are interaction with phosphoinositide-3 kinase. A helical transmembrane segment spans residues Glu86 to Ala106. Residues Ile107–Tyr129 are Extracellular-facing. Residues Leu130–Ala150 traverse the membrane as a helical segment. The Cytoplasmic portion of the chain corresponds to Lys151–Ile286. Residues Asp212 to Pro227 are compositionally biased toward polar residues. Residues Asp212–His231 are disordered. A helical transmembrane segment spans residues Glu287–Val306. The Extracellular portion of the chain corresponds to Leu307–Ala318. A helical transmembrane segment spans residues Val319–Ala336. Topologically, residues Thr337–Leu769 are cytoplasmic. Residue Asp374 is the 4-aspartylphosphate intermediate of the active site. Ser439, Ser450, Ser496, and Ser559 each carry phosphoserine. Position 570 is a phosphothreonine (Thr570). Phosphoserine is present on residues Ser587 and Ser672. Asp714 and Asp718 together coordinate Mg(2+). A helical membrane pass occupies residues Lys770–Leu789. The Extracellular segment spans residues Phe790–Leu799. A helical transmembrane segment spans residues Gly800–Ala820. Over Tyr821–Lys840 the chain is Cytoplasmic. Ser826 carries the phosphoserine modification. A helical membrane pass occupies residues Leu841–Phe863. Residues Phe864 to Cys915 are Extracellular-facing. The helical transmembrane segment at His916 to Lys935 threads the bilayer. Residues Thr936–Asn948 are Cytoplasmic-facing. Ser940 bears the Phosphoserine; by PKA mark. Residues Lys949–Tyr967 form a helical membrane-spanning segment. Topologically, residues Cys968 to Val982 are extracellular. A helical transmembrane segment spans residues Thr983–Lys1003. At Leu1004–Tyr1020 the chain is on the cytoplasmic side.

This sequence belongs to the cation transport ATPase (P-type) (TC 3.A.3) family. Type IIC subfamily. The sodium/potassium-transporting ATPase is composed of a catalytic alpha subunit, an auxiliary non-catalytic beta subunit and an additional regulatory subunit. Interacts with regulatory subunit FXYD1.

It localises to the membrane. It is found in the cell membrane. It catalyses the reaction K(+)(out) + Na(+)(in) + ATP + H2O = K(+)(in) + Na(+)(out) + ADP + phosphate + H(+). This is the catalytic component of the active enzyme, which catalyzes the hydrolysis of ATP coupled with the exchange of sodium and potassium ions across the plasma membrane. This action creates the electrochemical gradient of sodium and potassium, providing the energy for active transport of various nutrients. The protein is Sodium/potassium-transporting ATPase subunit alpha-2 (ATP1A2) of Pongo abelii (Sumatran orangutan).